Reading from the N-terminus, the 122-residue chain is Large ribosomal subunit protein bL12 (122 aa).

The protein belongs to the bacterial ribosomal protein bL12 family. Homodimer. Part of the ribosomal stalk of the 50S ribosomal subunit. Forms a multimeric L10(L12)X complex, where L10 forms an elongated spine to which 2 to 4 L12 dimers bind in a sequential fashion. Binds GTP-bound translation factors.

Forms part of the ribosomal stalk which helps the ribosome interact with GTP-bound translation factors. Is thus essential for accurate translation. The protein is Large ribosomal subunit protein bL12 of Flavobacterium psychrophilum (strain ATCC 49511 / DSM 21280 / CIP 103535 / JIP02/86).